The sequence spans 665 residues: Methionine--tRNA ligase (665 aa).

A 'HIGH' region motif is present at residues 12-22 (YYPSGKLHIGS). The 'KMSKS' region signature appears at 308–312 (KMSKS). Residue K311 coordinates ATP. Residues 562-665 (TFDAVEIRVA…PSVPNGSIIG (104 aa)) form the tRNA-binding domain.

This sequence belongs to the class-I aminoacyl-tRNA synthetase family. MetG type 2B subfamily. In terms of assembly, homodimer.

The protein resides in the cytoplasm. The enzyme catalyses tRNA(Met) + L-methionine + ATP = L-methionyl-tRNA(Met) + AMP + diphosphate. Is required not only for elongation of protein synthesis but also for the initiation of all mRNA translation through initiator tRNA(fMet) aminoacylation. In Streptococcus pyogenes serotype M6 (strain ATCC BAA-946 / MGAS10394), this protein is Methionine--tRNA ligase (metG).